The following is a 240-amino-acid chain: Peptidyl-tRNA hydrolase 2 (240 aa).

Tyr60 contributes to the tRNA binding site. His65 functions as the Proton acceptor in the catalytic mechanism. 3 residues coordinate tRNA: Tyr111, Asn113, and Asn159.

The protein belongs to the PTH family. As to quaternary structure, monomer.

It is found in the cytoplasm. The enzyme catalyses an N-acyl-L-alpha-aminoacyl-tRNA + H2O = an N-acyl-L-amino acid + a tRNA + H(+). Its function is as follows. Hydrolyzes ribosome-free peptidyl-tRNAs (with 1 or more amino acids incorporated), which drop off the ribosome during protein synthesis, or as a result of ribosome stalling. Functionally, catalyzes the release of premature peptidyl moieties from peptidyl-tRNA molecules trapped in stalled 50S ribosomal subunits, and thus maintains levels of free tRNAs and 50S ribosomes. In Corynebacterium jeikeium (strain K411), this protein is Peptidyl-tRNA hydrolase 2.